A 476-amino-acid chain; its full sequence is MATLIHTLTDHSDDVNCCAFSSSCLATCSLDKTIRIYSLNDFTELPYSPLKGHTYAVHCCCFSPSGHTLASCSTDGATIIWDTSDGRMLAVLEQPTGSPVRVCRFSPESTYLVSGAADGSVVLWNVHSMKFYRSGNVKDGSLVACAFSPGGNFFVTGSSCGDLTVWDDKMRCLCNEKAHDLGVTCCDISSHPVSDGEHASGCFQMASCGQDNKIKVWFILFADFLGGELRYKCTLSGHSAPVLTCAFSYDGQMLVSGSVDKCVIIYETNTGNILHTLSQHTRYVTTCAFAPCSLFLATGSMDKTVHIWKLDNKQPCAGNTIENDSKIRTAENWSEDDVSAWLCAQGFAELVGLFKANNIDGKELVNLTRESLIHELKMSLWLRSKILQKIEELRMKMVSVPVAVPDEFLCPITRELMKDPVIAADGYSYEKEAMENWISNNRRSSPMTNLPLPSLVLTPNRTLKMAISRWLETQQK.

WD repeat units lie at residues 10–47 (DHSD…ELPY), 52–91 (GHTY…MLAV), 95–134 (PTGS…FYRS), 137–176 (VKDG…LCNE), 178–227 (AHDL…FLGG), 237–276 (GHSA…ILHT), and 279–318 (QHTR…PCAG). The region spanning 333 to 396 (WSEDDVSAWL…LQKIEELRMK (64 aa)) is the SAM domain. The region spanning 403 to 476 (AVPDEFLCPI…ISRWLETQQK (74 aa)) is the U-box domain.

The protein is WD repeat, SAM and U-box domain-containing protein 1 (WDSUB1) of Gallus gallus (Chicken).